The following is a 230-amino-acid chain: Early E1A protein (230 aa).

An interaction with RB1 in competition with E2F1 region spans residues 40-48 (PSLHDLFDL). The LXCXE motif, interaction with host RB1 signature appears at 106–110 (LLCLE). Residues 145–163 (CLRCAYYQEQGENSICGLC) fold into a zinc finger. The tract at residues 189–230 (KPGSRKRSAVTSRGSVESSKRPCLPEPEQTEPLDLSLKPRPQ) is disordered. The short motif at 220–224 (PLDLS) is the PXDLS motif, CTBP-binding element. The Nuclear localization signal signature appears at 226-230 (KPRPQ).

The protein belongs to the adenoviridae E1A protein family. In terms of assembly, interacts with host UBE2I; this interaction interferes with polySUMOylation. Interacts with host RB1; this interaction induces the aberrant dissociation of RB1-E2F1 complex thereby disrupting the activity of RB1 and activating E2F1-regulated genes. Interacts with host ATF7; the interaction enhances ATF7-mediated viral transactivation activity which requires the zinc binding domains of both proteins. Isoform early E1A 32 kDa protein and isoform early E1A 26 kDa protein interact (via N-terminus) with CUL1 and E3 ubiquitin ligase RBX1; these interactions inhibit RBX1-CUL1-dependent elongation reaction of ubiquitin chains and attenuate ubiquitination of SCF(FBXW7) target proteins. Interacts (via PXLXP motif) with host ZMYND11/BS69 (via MYND-type zinc finger); this interaction inhibits E1A mediated transactivation. Interacts with host EP300; this interaction stimulates the acetylation of RB1 by recruiting EP300 and RB1 into a multimeric-protein complex. Interacts with host CTBP1 and CTBP2; this interaction seems to potentiate viral replication. Interacts with host DCAF7. Interacts with host DYRK1A. Interacts with host KPNA4; this interaction allows E1A import into the host nucleus. Interacts with host EP400; this interaction stabilizes MYC. Interacts with host TBP protein; this interaction probably disrupts the TBP-TATA complex.

Its subcellular location is the host nucleus. Plays a role in viral genome replication by driving entry of quiescent cells into the cell cycle. Stimulation of progression from G1 to S phase allows the virus to efficiently use the cellular DNA replicating machinery to achieve viral genome replication. E1A protein has both transforming and trans-activating activities. Induces the disassembly of the E2F1 transcription factor from RB1 by direct competition for the same binding site on RB1, with subsequent transcriptional activation of E2F1-regulated S-phase genes and of the E2 region of the adenoviral genome. Release of E2F1 leads to the ARF-mediated inhibition of MDM2 and causes TP53/p53 to accumulate because it is not targeted for degradation by MDM2-mediated ubiquitination anymore. This increase in TP53, in turn, would arrest the cell proliferation and direct its death but this effect is counteracted by the viral protein E1B-55K. Inactivation of the ability of RB1 to arrest the cell cycle is critical for cellular transformation, uncontrolled cellular growth and proliferation induced by viral infection. Interaction with RBX1 and CUL1 inhibits ubiquitination of the proteins targeted by SCF(FBXW7) ubiquitin ligase complex, and may be linked to unregulated host cell proliferation. The tumorigenesis-restraining activity of E1A may be related to the disruption of the host CtBP-CtIP complex through the CtBP binding motif. The chain is Early E1A protein from Canine adenovirus serotype 1 (strain CLL) (CAdV-1).